We begin with the raw amino-acid sequence, 159 residues long: RNA pyrophosphohydrolase (159 aa).

The region spanning G6–K149 is the Nudix hydrolase domain. The Nudix box signature appears at G38–G59.

This sequence belongs to the Nudix hydrolase family. RppH subfamily. A divalent metal cation serves as cofactor.

Accelerates the degradation of transcripts by removing pyrophosphate from the 5'-end of triphosphorylated RNA, leading to a more labile monophosphorylated state that can stimulate subsequent ribonuclease cleavage. This Pseudomonas aeruginosa (strain LESB58) protein is RNA pyrophosphohydrolase.